Reading from the N-terminus, the 344-residue chain is Aurora kinase B (344 aa).

Phosphothreonine is present on T35. The segment at 46 to 65 (NAQPTAAPGQKVVENSSGTP) is disordered. S62 carries the phosphoserine modification. At T64 the chain carries Phosphothreonine. Positions 77 to 327 (FEIGRPLGKG…LAQVSAHPWV (251 aa)) constitute a Protein kinase domain. ATP is bound by residues 83–91 (LGKGKFGNV) and K106. D200 serves as the catalytic Proton acceptor. The residue at position 215 (K215) is an N6-acetyllysine. S227 carries the phosphoserine modification. Position 232 is a phosphothreonine; by autocatalysis (T232).

This sequence belongs to the protein kinase superfamily. Ser/Thr protein kinase family. Aurora subfamily. As to quaternary structure, component of the chromosomal passenger complex (CPC) composed of at least BIRC5/survivin, CDCA8/borealin, INCENP, AURKB or AURKC; predominantly independent AURKB- and AURKC-containing complexes exist. Associates with RACGAP1 during M phase. Interacts with SPDYC; this interaction may be required for proper localization of active, Thr-232-phosphorylated AURKB form during prometaphase and metaphase. Interacts with p53/TP53. Interacts (via the middle kinase domain) with NOC2L (via the N- and C-terminus domains). Interacts with CDCA1. Interacts with EVI5. Interacts with JTB. Interacts with NDC80. Interacts with PSMA3. Interacts with RNF2/RING1B. Interacts with SEPTIN1. Interacts with SIRT2. Interacts with TACC1. Interacts with TTC28. Post-translationally, the phosphorylation of Thr-232 requires the binding to INCENP and occurs by means of an autophosphorylation mechanism. Thr-232 phosphorylation is indispensable for the AURKB kinase activity. In terms of processing, acetylated at Lys-215 by KAT5 at kinetochores, increasing AURKB activity and promoting accurate chromosome segregation in mitosis. Ubiquitinated by different BCR (BTB-CUL3-RBX1) E3 ubiquitin ligase complexes. Ubiquitinated by the BCR(KLHL9-KLHL13) E3 ubiquitin ligase complex, ubiquitination leads to removal from mitotic chromosomes and is required for cytokinesis. During anaphase, the BCR(KLHL21) E3 ubiquitin ligase complex recruits the CPC complex from chromosomes to the spindle midzone and mediates the ubiquitination of AURKB. Ubiquitination of AURKB by BCR(KLHL21) E3 ubiquitin ligase complex may not lead to its degradation by the proteasome. Deubiquitinated by USP35; inhibiting CDH1-mediated degradation of AURKB.

The protein localises to the nucleus. It is found in the chromosome. The protein resides in the centromere. It localises to the kinetochore. Its subcellular location is the cytoplasm. The protein localises to the cytoskeleton. It is found in the spindle. The protein resides in the midbody. It carries out the reaction L-seryl-[protein] + ATP = O-phospho-L-seryl-[protein] + ADP + H(+). It catalyses the reaction L-threonyl-[protein] + ATP = O-phospho-L-threonyl-[protein] + ADP + H(+). Its activity is regulated as follows. Activity is greatly increased when AURKB is within the CPC complex. In particular, AURKB-phosphorylated INCENP acts as an activator of AURKB. Positive feedback between HASPIN and AURKB contributes to CPC localization. Its function is as follows. Serine/threonine-protein kinase component of the chromosomal passenger complex (CPC), a complex that acts as a key regulator of mitosis. The CPC complex has essential functions at the centromere in ensuring correct chromosome alignment and segregation and is required for chromatin-induced microtubule stabilization and spindle assembly. Involved in the bipolar attachment of spindle microtubules to kinetochores and is a key regulator for the onset of cytokinesis during mitosis. Required for central/midzone spindle assembly and cleavage furrow formation. Key component of the cytokinesis checkpoint, a process required to delay abscission to prevent both premature resolution of intercellular chromosome bridges and accumulation of DNA damage: phosphorylates CHMP4C, leading to retain abscission-competent VPS4 (VPS4A and/or VPS4B) at the midbody ring until abscission checkpoint signaling is terminated at late cytokinesis. AURKB phosphorylates the CPC complex subunits BIRC5/survivin, CDCA8/borealin and INCENP. Phosphorylation of INCENP leads to increased AURKB activity. Other known AURKB substrates involved in centromeric functions and mitosis are CENPA, DES/desmin, GPAF, KIF2C, NSUN2, RACGAP1, SEPTIN1, VIM/vimentin, HASPIN, and histone H3. A positive feedback loop involving HASPIN and AURKB contributes to localization of CPC to centromeres. Phosphorylation of VIM controls vimentin filament segregation in cytokinetic process, whereas histone H3 is phosphorylated at 'Ser-10' and 'Ser-28' during mitosis (H3S10ph and H3S28ph, respectively). AURKB is also required for kinetochore localization of BUB1 and SGO1. Phosphorylation of p53/TP53 negatively regulates its transcriptional activity. Key regulator of active promoters in resting B- and T-lymphocytes: acts by mediating phosphorylation of H3S28ph at active promoters in resting B-cells, inhibiting RNF2/RING1B-mediated ubiquitination of histone H2A and enhancing binding and activity of the USP16 deubiquitinase at transcribed genes. Acts as an inhibitor of CGAS during mitosis: catalyzes phosphorylation of the N-terminus of CGAS during the G2-M transition, blocking CGAS liquid phase separation and activation, and thereby preventing CGAS-induced autoimmunity. Phosphorylates KRT5 during anaphase and telophase. Phosphorylates ATXN10 which promotes phosphorylation of ATXN10 by PLK1 and may play a role in the regulation of cytokinesis and stimulating the proteasomal degradation of ATXN10. This is Aurora kinase B (AURKB) from Bos taurus (Bovine).